A 163-amino-acid polypeptide reads, in one-letter code: Cyclic pyranopterin monophosphate synthase (163 aa).

Residues 75-77 (MCH) and 113-114 (ME) each bind substrate. Residue Asp-128 is part of the active site.

Belongs to the MoaC family. Homohexamer; trimer of dimers.

It carries out the reaction (8S)-3',8-cyclo-7,8-dihydroguanosine 5'-triphosphate = cyclic pyranopterin phosphate + diphosphate. It functions in the pathway cofactor biosynthesis; molybdopterin biosynthesis. Functionally, catalyzes the conversion of (8S)-3',8-cyclo-7,8-dihydroguanosine 5'-triphosphate to cyclic pyranopterin monophosphate (cPMP). The sequence is that of Cyclic pyranopterin monophosphate synthase from Desulforapulum autotrophicum (strain ATCC 43914 / DSM 3382 / VKM B-1955 / HRM2) (Desulfobacterium autotrophicum).